Reading from the N-terminus, the 264-residue chain is MLIREFRVVLPLTVEEYRVGQLYSVAKTSSQETSNGEGVEVLVNEPYKEPEHEGQYTHKIYHLGSRLPGWIRALIPSSALKLEEKAWNAYPYCKTVLKSPFLGEKFTFIIESRHAQDNCKTENIHNLSEKELKERTVEVIDITKPIKDPKNYKETEDPTKIRSEKANRGPLEEEKWRESTEMPIMTCYKLVTVEFKYFGFQTKVENFMMGIEFDLFTKFHRQVYCWLDEWFGMSMDDVRAFELKTKEDLKKKLEEKDENKAAEK.

Residues 151-174 form a disordered region; it reads NYKETEDPTKIRSEKANRGPLEEE. Positions 238–264 form a coiled coil; it reads VRAFELKTKEDLKKKLEEKDENKAAEK.

It belongs to the PtdIns transfer protein family. PI transfer class I subfamily. Post-translationally, phosphorylated in response to activation of rasG.

The protein localises to the cytoplasm. It is found in the golgi apparatus. Functionally, catalyzes the transfer of PtdIns and phosphatidylcholine between membranes. The protein is Phosphatidylinositol transfer protein 1 (pitA) of Dictyostelium discoideum (Social amoeba).